The sequence spans 374 residues: 4-hydroxy-3-methylbut-2-en-1-yl diphosphate synthase (flavodoxin) (374 aa).

Residues Cys-270, Cys-273, Cys-305, and Glu-312 each coordinate [4Fe-4S] cluster.

It belongs to the IspG family. [4Fe-4S] cluster is required as a cofactor.

The enzyme catalyses (2E)-4-hydroxy-3-methylbut-2-enyl diphosphate + oxidized [flavodoxin] + H2O + 2 H(+) = 2-C-methyl-D-erythritol 2,4-cyclic diphosphate + reduced [flavodoxin]. It participates in isoprenoid biosynthesis; isopentenyl diphosphate biosynthesis via DXP pathway; isopentenyl diphosphate from 1-deoxy-D-xylulose 5-phosphate: step 5/6. Its function is as follows. Converts 2C-methyl-D-erythritol 2,4-cyclodiphosphate (ME-2,4cPP) into 1-hydroxy-2-methyl-2-(E)-butenyl 4-diphosphate. This Cellvibrio japonicus (strain Ueda107) (Pseudomonas fluorescens subsp. cellulosa) protein is 4-hydroxy-3-methylbut-2-en-1-yl diphosphate synthase (flavodoxin).